The primary structure comprises 274 residues: MMSNQTVYQFIAENQNELLQLWTDTLKELSEQESYQLTDQVYENISKEYIDILLLSVKDENAAESQISELALRAVQIGLSMKFLATALAEFWKRLYTKMNDKRLPDQESTELIWQIDRFFSPINTEIFNQYSISWEKTVSLQKIALQELSAPLIPVFENITVMPLVGTIDTERAKRIMENLLNGVVKHRSQVVLIDITGVPVVDTMVAHHIIQASEAVRLVGAKCLLAGIRPEIAQTIVNLGIDLSQVITKNTLQKGIQTALEMTDRKIVSLGE.

An STAS domain is found at 150–265 (SAPLIPVFEN…KGIQTALEMT (116 aa)). Phosphothreonine occurs at positions 171 and 205.

In terms of assembly, interacts with RsbRB and RsbS in the stressosome. The stressosome probably also contains RsbRC and RsbRD. Phosphorylated by RsbT. This threonine phosphorylation abrogates the ability of RsbRA to stimulate RsbT in vitro.

Its function is as follows. Acts as a positive regulator of sigma-B activity in response to salt and heat stress by stimulating the activity of the RsbT kinase toward RsbS in vitro. One of 4 functionally non-identical RsbR paralogs, it functions in the environmental signaling branch of the general stress response. Functionally, negative regulator of sigma-B activity. Non-phosphorylated RsbS binds to RsbT, preventing its association with RsbU. Requires any one of RsbRA, RsbRB, RsbRC or RsbRD to sequester RsbT. When RsbS and the RsbR paralog(s) are phosphorylated, they release RsbT, which can then bind and activate RsbU. The protein is RsbT co-antagonist protein RsbRA (rsbRA) of Bacillus subtilis (strain 168).